Consider the following 1302-residue polypeptide: Regulator of telomere elongation helicase 1 (1302 aa).

The Helicase ATP-binding domain maps to 7 to 297; sequence NGVTVDFPFQ…TKTAQQGEPH (291 aa). An ATP-binding site is contributed by 42-49; it reads SHTGTGKT. [4Fe-4S] cluster-binding residues include Cys-146, Cys-164, Cys-173, and Cys-208. Positions 152 to 168 match the Nuclear localization signal motif; it reads KKQESNHIQIHLCRKKV. Residues 251–254 carry the DEAH box motif; that stretch reads DEAH. The segment covering 758-767 has biased composition (low complexity); sequence PAPAPRATAP. A disordered region spans residues 758–819; that stretch reads PAPAPRATAP…AAGDPESSLC (62 aa). A compositionally biased stretch (basic and acidic residues) spans 770–780; sequence REGEDAVREVK. Positions 873 to 879 match the Nuclear localization signal motif; sequence PRGGRKK. Disordered regions lie at residues 981-1006, 1019-1058, 1134-1153, and 1160-1234; these read RPEH…APDP, DPRE…GKQG, CTDL…PQEE, and VLTH…QAAG. Positions 1178-1187 are enriched in polar residues; it reads KTQSKISSLL. A PIP-box motif is present at residues 1180–1187; the sequence is QSKISSLL.

It belongs to the helicase family. RAD3/XPD subfamily. In terms of assembly, interacts with TERF1. Interacts (via PIP-box) with PCNA; the interaction is direct and essential for suppressing telomere fragility. Interacts with MMS19; the interaction mediates the association of RTEL1 with the cytosolic iron-sulfur protein assembly (CIA) complex.

Its subcellular location is the nucleus. It catalyses the reaction ATP + H2O = ADP + phosphate + H(+). Functionally, a probable ATP-dependent DNA helicase implicated in telomere-length regulation, DNA repair and the maintenance of genomic stability. Acts as an anti-recombinase to counteract toxic recombination and limit crossover during meiosis. Regulates meiotic recombination and crossover homeostasis by physically dissociating strand invasion events and thereby promotes noncrossover repair by meiotic synthesis dependent strand annealing (SDSA) as well as disassembly of D loop recombination intermediates. Also disassembles T loops and prevents telomere fragility by counteracting telomeric G4-DNA structures, which together ensure the dynamics and stability of the telomere. The protein is Regulator of telomere elongation helicase 1 of Pongo abelii (Sumatran orangutan).